The sequence spans 99 residues: Aspartyl/glutamyl-tRNA(Asn/Gln) amidotransferase subunit C (99 aa).

This sequence belongs to the GatC family. As to quaternary structure, heterotrimer of A, B and C subunits.

It catalyses the reaction L-glutamyl-tRNA(Gln) + L-glutamine + ATP + H2O = L-glutaminyl-tRNA(Gln) + L-glutamate + ADP + phosphate + H(+). The enzyme catalyses L-aspartyl-tRNA(Asn) + L-glutamine + ATP + H2O = L-asparaginyl-tRNA(Asn) + L-glutamate + ADP + phosphate + 2 H(+). Allows the formation of correctly charged Asn-tRNA(Asn) or Gln-tRNA(Gln) through the transamidation of misacylated Asp-tRNA(Asn) or Glu-tRNA(Gln) in organisms which lack either or both of asparaginyl-tRNA or glutaminyl-tRNA synthetases. The reaction takes place in the presence of glutamine and ATP through an activated phospho-Asp-tRNA(Asn) or phospho-Glu-tRNA(Gln). This Bifidobacterium longum (strain NCC 2705) protein is Aspartyl/glutamyl-tRNA(Asn/Gln) amidotransferase subunit C.